The primary structure comprises 218 residues: uncharacterized protein (218 aa).

The protein belongs to the glycosyltransferase 2 family.

This is an uncharacterized protein from Mycobacterium bovis (strain ATCC BAA-935 / AF2122/97).